We begin with the raw amino-acid sequence, 425 residues long: Kynurenine/alpha-aminoadipate aminotransferase, mitochondrial (425 aa).

The N-terminal 29 residues, 1 to 29 (MNYARFITATSAARKPSTIRVMTEILSKA), are a transit peptide targeting the mitochondrion. Arg20 contacts substrate. Position 69 is an N6-acetyllysine (Lys69). 2 residues coordinate substrate: Tyr74 and Tyr142. Residues 178–208 (WKPEDSKNPKKNSPKFLYTVPNGNNPSGNSL) form a disordered region. Lys179 carries the post-translational modification N6-acetyllysine. The segment covering 198-208 (PNGNNPSGNSL) has biased composition (polar residues). Asn202 provides a ligand contact to substrate. An N6-(pyridoxal phosphate)lysine; alternate modification is found at Lys263. N6-acetyllysine; alternate occurs at positions 263 and 339. An N6-succinyllysine; alternate mark is found at Lys263 and Lys339. Arg399 is a substrate binding site. Lys422 is modified (N6-acetyllysine).

Belongs to the class-I pyridoxal-phosphate-dependent aminotransferase family. Homodimer. Requires pyridoxal 5'-phosphate as cofactor.

It is found in the mitochondrion. It carries out the reaction L-kynurenine + 2-oxoglutarate = kynurenate + L-glutamate + H2O. It catalyses the reaction L-2-aminoadipate + 2-oxoglutarate = 2-oxoadipate + L-glutamate. The catalysed reaction is glycine + 2-oxoglutarate = glyoxylate + L-glutamate. The enzyme catalyses L-kynurenine + glyoxylate = kynurenate + glycine + H2O. It carries out the reaction 3-hydroxy-L-kynurenine + glyoxylate = xanthurenate + glycine + H2O. It catalyses the reaction 2-oxohexanoate + L-kynurenine = L-2-aminohexanoate + kynurenate + H2O. The catalysed reaction is 3-phenylpyruvate + L-kynurenine = kynurenate + L-phenylalanine + H2O. The enzyme catalyses 4-methylsulfanyl-2-oxobutanoate + L-kynurenine = kynurenate + L-methionine + H2O. It carries out the reaction 2-oxo-3-sulfanylpropanoate + L-kynurenine = kynurenate + L-cysteine + H2O. It catalyses the reaction indole-3-pyruvate + L-kynurenine = kynurenate + L-tryptophan + H2O. The catalysed reaction is 2-oxopentanoate + L-kynurenine = L-2-aminopentanoate + kynurenate + H2O. The enzyme catalyses 4-methyl-2-oxopentanoate + L-kynurenine = kynurenate + L-leucine + H2O. It carries out the reaction glyoxylate + L-methionine = 4-methylsulfanyl-2-oxobutanoate + glycine. It catalyses the reaction L-2-aminoadipate + glyoxylate = 2-oxoadipate + glycine. The catalysed reaction is L-tyrosine + glyoxylate = 3-(4-hydroxyphenyl)pyruvate + glycine. The enzyme catalyses glyoxylate + L-phenylalanine = 3-phenylpyruvate + glycine. It carries out the reaction L-tryptophan + glyoxylate = indole-3-pyruvate + glycine. It catalyses the reaction L-leucine + glyoxylate = 4-methyl-2-oxopentanoate + glycine. The catalysed reaction is 2-oxobutanoate + L-kynurenine = (2S)-2-aminobutanoate + kynurenate + H2O. The enzyme catalyses 2-oxoadipate + L-kynurenine = L-2-aminoadipate + kynurenate + H2O. It functions in the pathway amino-acid degradation; L-lysine degradation via saccharopine pathway; glutaryl-CoA from L-lysine: step 4/6. Its function is as follows. Transaminase with broad substrate specificity. Has transaminase activity towards aminoadipate, kynurenine, methionine and glutamate. Shows activity also towards tryptophan, aspartate and hydroxykynurenine. Accepts a variety of oxo-acids as amino-group acceptors, with a preference for 2-oxoglutarate, 2-oxocaproic acid, phenylpyruvate and alpha-oxo-gamma-methiol butyric acid. Can also use glyoxylate as amino-group acceptor (in vitro). This is Kynurenine/alpha-aminoadipate aminotransferase, mitochondrial from Bos taurus (Bovine).